The chain runs to 594 residues: Arginine--tRNA ligase (594 aa).

Positions 139–149 (ANPTGPLHVGH) match the 'HIGH' region motif.

The protein belongs to the class-I aminoacyl-tRNA synthetase family. In terms of assembly, monomer.

Its subcellular location is the cytoplasm. It catalyses the reaction tRNA(Arg) + L-arginine + ATP = L-arginyl-tRNA(Arg) + AMP + diphosphate. The sequence is that of Arginine--tRNA ligase from Burkholderia pseudomallei (strain 1106a).